The following is a 350-amino-acid chain: CMP-N-acetylneuraminate-beta-galactosamide-alpha-2,3-sialyltransferase 2 (350 aa).

The Cytoplasmic segment spans residues 1 to 6; it reads MKCSLR. Residues 7–27 traverse the membrane as a helical; Signal-anchor for type II membrane protein segment; the sequence is VWFLSMAFLLVFIMSLLFTYS. Over 28–350 the chain is Lumenal; the sequence is HHSMATLPYL…ASKIEVYRGN (323 aa). Cystine bridges form between C70-C75, C72-C149, and C152-C291. Substrate is bound by residues Q116, N157, and N180. N211 carries an N-linked (GlcNAc...) asparagine glycan. The substrate site is built by Y240, Y276, G280, G300, H309, and H326.

It belongs to the glycosyltransferase 29 family. As to quaternary structure, homodimer; disulfide-linked. Homodimer formation occurs in the endoplasmic reticulum. Post-translationally, the soluble form derives from the membrane form by proteolytic processing. N-glycosylated; necessary for proper exit from endoplasmic reticulum and trafficking to the Golgi apparatus.

It localises to the golgi apparatus. Its subcellular location is the golgi stack membrane. The protein resides in the secreted. It carries out the reaction a beta-D-galactosyl-(1-&gt;3)-N-acetyl-alpha-D-galactosaminyl derivative + CMP-N-acetyl-beta-neuraminate = an N-acetyl-alpha-neuraminyl-(2-&gt;3)-beta-D-galactosyl-(1-&gt;3)-N-acetyl-alpha-D-galactosaminyl derivative + CMP + H(+). The enzyme catalyses a ganglioside GM1 (d18:1(4E)) + CMP-N-acetyl-beta-neuraminate = a ganglioside GD1a (d18:1(4E)) + CMP + H(+). It catalyses the reaction ganglioside GM1 (d18:1(4E)/18:0) + CMP-N-acetyl-beta-neuraminate = ganglioside GD1a (18:1(4E)/18:0) + CMP + H(+). The catalysed reaction is a ganglioside GA1 + CMP-N-acetyl-beta-neuraminate = a ganglioside GM1b + CMP + H(+). It carries out the reaction a ganglioside GA1 (d18:1(4E)) + CMP-N-acetyl-beta-neuraminate = a ganglioside GM1b (d18:1(4E)) + CMP + H(+). The enzyme catalyses a globoside GalGb4Cer + CMP-N-acetyl-beta-neuraminate = a globoside MSGG + CMP + H(+). Its pathway is protein modification; protein glycosylation. It participates in glycolipid biosynthesis. A beta-galactoside alpha2-3 sialyltransferase primarily involved in terminal sialylation of ganglio and globo series glycolipids. Catalyzes the transfer of sialic acid (N-acetyl-neuraminic acid; Neu5Ac) from the nucleotide sugar donor CMP-Neu5Ac onto acceptor Galbeta-(1-&gt;3)-GalNAc-terminated glycoconjugates through an alpha2-3 linkage. Sialylates GM1/GM1a, GA1/asialo-GM1 gangliosides to form GD1a and GM1b, respectively. Together with ST3GAL3, primarily responsible for biosynthesis of brain gangliosides that function as ligand for myelin-associated glycoprotein MAG on axons, regulating MAG expression and axonal myelin stability and regeneration. Responsible for the sialylation of the pluripotent stem cell- and cancer stem cell-associated antigen SSEA3, forming SSEA4. Sialylates with low efficiency asialofetuin, presumably onto O-glycosidically linked Galbeta-(1-&gt;3)-GalNAc-O-Ser. The sequence is that of CMP-N-acetylneuraminate-beta-galactosamide-alpha-2,3-sialyltransferase 2 (St3gal2) from Rattus norvegicus (Rat).